Reading from the N-terminus, the 177-residue chain is MVTEFRDAWEARYGLVPGACCLKNSVTFSSLESGQGLERNPNQEALADRKNKKCQFKNEYVACHATVFPHFVNPENPKAVEFLKNHPLNIPVNMDMTFGPLKDTPAFCYGGHKLGLCNSLYDSIIYDDTYQGKGEHNLKKFFSEAIATCFLYQNAIKPINYKPKNMKHSVIGVSLYY.

The protein resides in the plastid. The protein localises to the chloroplast. This is an uncharacterized protein from Chlorella vulgaris (Green alga).